The chain runs to 388 residues: Succinate--CoA ligase [ADP-forming] subunit beta (388 aa).

Residues Lys-46, 53-55, Glu-99, Cys-102, and Glu-107 contribute to the ATP site; that span reads GRG. 2 residues coordinate Mg(2+): Asn-199 and Asp-213. Substrate is bound by residues Asn-264 and 321 to 323; that span reads GIV.

It belongs to the succinate/malate CoA ligase beta subunit family. Heterotetramer of two alpha and two beta subunits. Requires Mg(2+) as cofactor.

The catalysed reaction is succinate + ATP + CoA = succinyl-CoA + ADP + phosphate. It carries out the reaction GTP + succinate + CoA = succinyl-CoA + GDP + phosphate. Its pathway is carbohydrate metabolism; tricarboxylic acid cycle; succinate from succinyl-CoA (ligase route): step 1/1. Succinyl-CoA synthetase functions in the citric acid cycle (TCA), coupling the hydrolysis of succinyl-CoA to the synthesis of either ATP or GTP and thus represents the only step of substrate-level phosphorylation in the TCA. The beta subunit provides nucleotide specificity of the enzyme and binds the substrate succinate, while the binding sites for coenzyme A and phosphate are found in the alpha subunit. The protein is Succinate--CoA ligase [ADP-forming] subunit beta of Actinobacillus pleuropneumoniae serotype 3 (strain JL03).